We begin with the raw amino-acid sequence, 498 residues long: Lysine--tRNA ligase (498 aa).

E408 and E415 together coordinate Mg(2+).

It belongs to the class-II aminoacyl-tRNA synthetase family. As to quaternary structure, homodimer. It depends on Mg(2+) as a cofactor.

Its subcellular location is the cytoplasm. It carries out the reaction tRNA(Lys) + L-lysine + ATP = L-lysyl-tRNA(Lys) + AMP + diphosphate. In Listeria innocua serovar 6a (strain ATCC BAA-680 / CLIP 11262), this protein is Lysine--tRNA ligase.